The following is a 352-amino-acid chain: F-box/kelch-repeat protein At1g57790 (352 aa).

The region spanning 10-56 (KNLWKDLPLELLSSVMTFLEIKDNVRASVVCKSWFEAAVSVRVIDKS) is the F-box domain. Kelch repeat units follow at residues 148 to 189 (VVFT…HNNV) and 190 to 234 (VFSN…WNEG).

In Arabidopsis thaliana (Mouse-ear cress), this protein is F-box/kelch-repeat protein At1g57790.